Reading from the N-terminus, the 377-residue chain is Palmitoyltransferase PFA4 (377 aa).

Over 1 to 9 (MAIKLKNRW) the chain is Cytoplasmic. A helical membrane pass occupies residues 10-30 (LGVAIPAFLVALIGYGSHYFI). Over 31–122 (LSNFLSWNEQ…NCVGHSNFPH (92 aa)) the chain is Lumenal. One can recognise a DHHC domain in the interval 78–128 (NYCKKCRVYKPERAHHCKTCNQCVLAMDHHCPWTLNCVGHSNFPHFMRFLF). The active-site S-palmitoyl cysteine intermediate is Cys108. Residues 123 to 143 (FMRFLFWVIFSTAYLLFLLIG) traverse the membrane as a helical segment. The Cytoplasmic segment spans residues 144–163 (RIYLLWSIRHTAFHHRSTSE). The helical transmembrane segment at 164 to 184 (IIFICIMTPMDAFVLLTVSSL) threads the bilayer. Topologically, residues 185 to 377 (LGRCIYNQCL…SDFGVDTELE (193 aa)) are lumenal.

The protein belongs to the DHHC palmitoyltransferase family. PFA4 subfamily.

The protein resides in the endoplasmic reticulum membrane. It catalyses the reaction L-cysteinyl-[protein] + hexadecanoyl-CoA = S-hexadecanoyl-L-cysteinyl-[protein] + CoA. In terms of biological role, mediates the reversible addition of palmitate to target proteins, thereby regulating their membrane association and biological function. In Kluyveromyces lactis (strain ATCC 8585 / CBS 2359 / DSM 70799 / NBRC 1267 / NRRL Y-1140 / WM37) (Yeast), this protein is Palmitoyltransferase PFA4.